Reading from the N-terminus, the 425-residue chain is MSSPLHYVLDGIHCEPHFFTVPLDHQQPDDEETITLFGRTLCRKDRLDDELPWLLYLQGGPGFGAPRPSANGGWIKRALQEFRVLLLDQRGTGHSTPIHAELLAHLNPRQQADYLSHFRADSIVRDAELIREQLSPDHPWSLLGQSFGGFCSLTYLSLFPDSLHEVYLTGGVAPIGRSADEVYRATYQRVADKNRAFFARFPHAQAIANRLATHLQRHDVRLPNGQRLTVEQLQQQGLDLGASGAFEELYYLLEDAFIGEKLNPAFLYQVQAMQPFNTNPVFAILHELIYCEGAASHWAAERVRGEFPALAWAQGKDFAFTGEMIFPWMFEQFRELIPLKEAAHLLAEKADWGPLYDPVQLARNKVPVACAVYAEDMYVEFDYSRETLKGLSNSRAWITNEYEHNGLRVDGEQILDRLIRLNRDC.

The 264-residue stretch at 52 to 315 (PWLLYLQGGP…EFPALAWAQG (264 aa)) folds into the AB hydrolase-1 domain. The Nucleophile role is filled by Ser-146. Asp-351 is a catalytic residue. Catalysis depends on His-404, which acts as the Proton donor.

It belongs to the peptidase S33 family. Homotetramer.

It is found in the cytoplasm. It carries out the reaction Release of N-terminal proline from a peptide.. Its function is as follows. Higher activity toward long peptides. Acts on hydroxyproline beta-naphthylamide with almost as high an activity as on proline beta-naphthylamide. This is Proline iminopeptidase (pip) from Aeromonas sobria.